Consider the following 219-residue polypeptide: Resolvase (219 aa).

Positions 15–159 (VARIYLRAST…EDRRERQRQG (145 aa)) constitute a Resolvase/invertase-type recombinase catalytic domain. Residue Ser23 is the O-(5'-phospho-DNA)-serine intermediate of the active site.

Belongs to the site-specific recombinase resolvase family.

Functionally, involved in plasmid partition. The polypeptide is Resolvase (parA) (Escherichia coli).